The chain runs to 70 residues: V-type proton ATPase subunit e1 (70 aa).

Helical transmembrane passes span 1–21 and 36–56; these read MGFLITTLIFVVVGIIASLCV and LTLVITATVCCWMMWAIVYIA.

This sequence belongs to the V-ATPase e1/e2 subunit family. V-ATPase is a heteromultimeric enzyme composed of a peripheral catalytic V1 complex (components A to H) attached to an integral membrane V0 proton pore complex (components: a, c, c'', d and e).

It is found in the golgi apparatus. The protein localises to the trans-Golgi network membrane. Functionally, subunit of the integral membrane V0 complex of vacuolar ATPase. V-ATPase is responsible for acidifying a variety of intracellular compartments in eukaryotic cells. In Arabidopsis thaliana (Mouse-ear cress), this protein is V-type proton ATPase subunit e1 (VHA-e1).